The following is a 267-amino-acid chain: Serine/arginine-rich splicing factor 7 (267 aa).

The region spanning 40–113 is the RRM domain; that stretch reads TKVYVGNLGT…SRVRVELSTG (74 aa). N6-acetyllysine; alternate is present on Lys-53. Lys-53 participates in a covalent cross-link: Glycyl lysine isopeptide (Lys-Gly) (interchain with G-Cter in SUMO2); alternate. The residue at position 61 (Ser-61) is a Phosphoserine. The interval 110 to 127 is sufficient for interaction with NXF1; sequence LSTGMPRRSRFDRPPARR. Residues 133 to 150 form a CCHC-type zinc finger; that stretch reads DRCYECGEKGHYAYDCHR. The span at 152-209 shows a compositional bias: basic residues; that stretch reads SRRRRSRSRSRSHSRSRGRRYSRSRSRSRGRRSRSASPRRSRSVSLRRSRSASLRRSR. Positions 152–267 are disordered; sequence SRRRRSRSRS…HRSASPERMD (116 aa). Repeat copies occupy residues 182–189, 190–197, 198–205, and 206–213. Positions 182-255 are 6 X 8 AA repeats of R-R-S-R-S-X-S-X; that stretch reads RRSRSASPRR…SPKRSRSPSG (74 aa). 3 positions are modified to phosphoserine: Ser-192, Ser-194, and Ser-196. Residues Ser-210, Ser-212, Ser-221, Ser-223, and Ser-225 each carry the phosphoserine modification. The span at 223–251 shows a compositional bias: basic residues; the sequence is SRSRSRSRSISRPRSSRSKSRSPSPKRSR. One copy of the 5; approximate repeat lies at 240–247; sequence SKSRSPSP. One copy of the 6; approximate repeat lies at 248–255; the sequence is KRSRSPSG. Ser-260 and Ser-262 each carry phosphoserine.

The protein belongs to the splicing factor SR family. As to quaternary structure, found in large molecular weight complexes containing CCNL1 and the p110 isoforms of either CDC2L1 or CDC2L2. Interacts with CCNL2 and CPSF6. Interacts with NXF1. Interacts with YTHDC1. Post-translationally, extensively phosphorylated on serine residues in the RS domain.

The protein resides in the nucleus. It is found in the cytoplasm. In terms of biological role, required for pre-mRNA splicing. Represses the splicing of MAPT/Tau exon 10. May function as export adapter involved in mRNA nuclear export such as of histone H2A. Binds mRNA which is thought to be transferred to the NXF1-NXT1 heterodimer for export (TAP/NXF1 pathway); enhances NXF1-NXT1 RNA-binding activity. RNA-binding is semi-sequence specific. The sequence is that of Serine/arginine-rich splicing factor 7 (Srsf7) from Mus musculus (Mouse).